The primary structure comprises 126 residues: Holo-[acyl-carrier-protein] synthase (126 aa).

Mg(2+) is bound by residues aspartate 9 and glutamate 58.

This sequence belongs to the P-Pant transferase superfamily. AcpS family. In terms of assembly, homodimer. The cofactor is Mg(2+).

The protein resides in the cytoplasm. The enzyme catalyses apo-[ACP] + CoA = holo-[ACP] + adenosine 3',5'-bisphosphate + H(+). Transfers the 4'-phosphopantetheine moiety from coenzyme A to the 'Ser-36' of acyl-carrier-protein. In Escherichia coli O157:H7, this protein is Holo-[acyl-carrier-protein] synthase.